The following is a 349-amino-acid chain: Phloroglucinol synthase (349 aa).

Cys138 is an active-site residue.

Belongs to the thiolase-like superfamily. Chalcone/stilbene synthases family.

The enzyme catalyses 3 malonyl-CoA + 3 H(+) = 1,3,5-trihydroxybenzene + 3 CO2 + 3 CoA. Its pathway is antibiotic biosynthesis. Type III polyketide synthase that catalyzes the synthesis of phloroglucinol from three molecules of malonyl-CoA. In addition to its ability to produce phloroglucinol from malonyl-CoA, it exhibits broad substrate specificity, accepting C4-C12 aliphatic acyl-CoAs and phenylacetyl-CoA as the starters to form C6-polyoxoalkylated alpha-pyrones from sequential condensation with malonyl-CoA. This is Phloroglucinol synthase from Pseudomonas fluorescens (strain ATCC BAA-477 / NRRL B-23932 / Pf-5).